The sequence spans 2220 residues: Calcineurin-binding protein cabin-1 (2220 aa).

2 positions are modified to phosphoserine: S10 and S11. A Phosphothreonine modification is found at T12. 2 positions are modified to phosphoserine: S20 and S66. TPR repeat units follow at residues 36 to 69 (AFALYHKALDLQKHDRFEESAKAYHELLEASLLR), 90 to 123 (YSTYKNLAQLAAQREDLETAMEFYLEAVMLDSTD), and 125 to 157 (NLWYKIGHVALRLIRIPLARHAFEEGLRCNPDH). The segment at 361 to 400 (GAPVGDISGGDKSKKGVKRKKISEESGETAKRRSARVRNT) is disordered. The span at 382 to 391 (ISEESGETAK) shows a compositional bias: basic and acidic residues. S433 and S450 each carry phosphoserine. A TPR 4 repeat occupies 615–648 (VRVYWLKARFLALQGDMEQALENYDICTEMLQSS). S673 is modified (phosphoserine). TPR repeat units follow at residues 1055 to 1088 (NELYYLLADYHFKNKEQSKAIKFYMHDICICPNR) and 1106 to 1139 (KLNSNELKSDGPIWKHATPVLNCFRRALEIDSSN). Disordered stretches follow at residues 1299-1476 (FARG…STPT), 1668-1845 (AEGS…RLSR), 1916-2165 (AQRQ…GSIS), and 2197-2220 (VLETSSQESSLESETDEDDDYMDI). The segment covering 1301–1324 (RGEEKNTPKASEKEKACLVDEDSH) has biased composition (basic and acidic residues). A compositionally biased stretch (low complexity) spans 1327–1349 (AGTLPGPGASLPSSSGPGLTSPP). The span at 1377–1397 (DSTAVALSDSSSTQDFFNEPT) shows a compositional bias: polar residues. A compositionally biased stretch (basic and acidic residues) spans 1402–1412 (GSRKSYTEKRL). S1439 bears the Phosphoserine mark. Over residues 1715–1725 (SGPGPEPGGKV) the composition is skewed to gly residues. 2 stretches are compositionally biased toward basic and acidic residues: residues 1744 to 1753 (SGERKDKESP) and 1784 to 1794 (PARDRGPESRP). Residues 1812-1823 (PLTPAQPAPAPA) show a composition bias toward pro residues. 2 stretches are compositionally biased toward polar residues: residues 1918-1927 (RQASGDTPTT) and 1975-1989 (TIITCPPSASASTLD). Residue T1924 is modified to Phosphothreonine. Basic and acidic residues predominate over residues 2070–2081 (GKLRPEPRRDGE). Over residues 2091–2112 (PLSSPPTAASSKAPSSGSAQPP) the composition is skewed to low complexity. S2094 bears the Phosphoserine mark. A required for interaction with calcineurin region spans residues 2116–2153 (PGKPEPSRAKSRPLPNMPKLVIPSAATKFPPEITVTPP). T2151 and T2154 each carry phosphothreonine. A compositionally biased stretch (acidic residues) spans 2207-2220 (LESETDEDDDYMDI).

As to quaternary structure, component of a complex that includes at least ASF1A, CABIN1, HIRA, histone H3.3 and UBN1. Interacts with calcineurin. Interacts with MEF2B. In terms of processing, activated through PKC-mediated hyperphosphorylation. Phosphorylation by the DNA damage kinases ATM and CHK2 enhances ubiquitination. Upon genotoxic stress, ubiquitination by the DCX(DDB2) E3 ubiquitin-protein ligase complex targets CABIN1 for proteasomal degradation, leading to the release of p53/TP53. As to expression, widely expressed in different tissues.

It is found in the nucleus. May be required for replication-independent chromatin assembly. May serve as a negative regulator of T-cell receptor (TCR) signaling via inhibition of calcineurin. Inhibition of activated calcineurin is dependent on both PKC and calcium signals. Acts as a negative regulator of p53/TP53 by keeping p53 in an inactive state on chromatin at promoters of a subset of it's target genes. This Homo sapiens (Human) protein is Calcineurin-binding protein cabin-1 (CABIN1).